We begin with the raw amino-acid sequence, 196 residues long: Calcium channel flower (196 aa).

3 helical membrane-spanning segments follow: residues 36-56 (LGIV…LSII), 67-89 (IIQM…ICIE), and 114-134 (AVPP…GLIF).

Belongs to the calcium channel flower family. As to quaternary structure, homomultimer. Associates with the dally/ magu complex.

Its subcellular location is the cell membrane. The protein resides in the cytoplasmic vesicle. The protein localises to the secretory vesicle. It is found in the synaptic vesicle membrane. It localises to the presynaptic cell membrane. Its subcellular location is the endosome. Channel activity is inhibited by La(3+), which reduces Ca(2+) influx and thus inhibits it's function in promoting activity-dependent bulk endocytosis (ADBE) in response to high stimuli. Functionally, transmembrane protein which mediates synaptic endocytosis, fitness-based cell culling, neuronal culling, morphogen gradient scaling, and calcium transport. Regulates synaptic endocytosis and hence couples exo- with endocytosis. Controls two major modes of synaptic vesicle (SV) endocytosis in the synaptic boutons of neuromuscular junctions (NMJs); Ca(2+) channel-independent Clathrin-mediated endocytosis (CME) in response to mild stimulation, and Ca(2+) channel-dependent activity-dependent bulk endocytosis (ADBE) in response to strong stimulation. Functions in ADBE and subsequent SV reformation from bulk endosomes by initiating Ca(2+) channel-dependent phosphatidylinositol 4,5-bisphosphate (PtdIns(4,5)P2) compartmentalization in synaptic boutons. There it acts at the periactive zone to provide the low Ca(2+) levels required to initiate Calcineurin activation and upregulate PtdIns(4,5)P2. Conversely PtdIns(4,5)P2 enhances fwe Ca(2+) channel-activity, establishing a positive feedback loop that induces PtdIns(4,5)P2 microdomain at the periactive zone. These microdomains trigger bulk membrane invagination (i.e. ADBE) by triggering actin polymerization while also promoting localization of fwe to bulk endosomes, thereby removing the ADBE trigger to reduce endocytosis and prevent excess membrane uptake. PtdIns(4,5)P2 then promotes SV reformation from the bulk endosomes, to coordinate ADBE and subsequent SV reformation. Different combinations of the flower isoforms at the cell membrane are also required for the identification and elimination of suboptimal or supernumerary cells during development, regeneration, and adulthood. Required for the recognition and elimination of unfit cells in the developing wing during cell competition. In the developing pupal retina, mediates the elimination of unwanted postmitotic neurons, including supernumerary photoreceptor neurons that form at the periphery of the retina and are contained within incomplete ommatidia units. Also required for efficient elimination and replacement of old neurons by newly generated neurons during regeneration in the adult brain following mechanical injury. Downstream of the flower fitness fingerprints, cells identified as unwanted or unfit are eliminated via apoptosis through the expression of ahuizotl (azot). However, the cells marked for elimination by the flower isoforms only undergo apoptosis if additional thresholds are met; (1) their neighboring fit/healthy cells express different levels of the fwe isoforms, and (2) the levels of the protective signal SPARC expressed by the loser or unwanted cells are unable to inhibit caspase activation. These additional thresholds for flower-mediated apoptosis, allows useful cells to recover from transient and limited stress before they are unnecessarily eliminated. Functions with dally and magu in a mechanism of scaling, which utilises apoptosis to ensure that the dpp morphogen gradient, which mediates organ growth, remains proportional to the size of the growing wing. In this mechanism, fwe represses dally- and Magu-dependent activity in expanding the gradient, and dally/Magu inhibits fwe-dependent apoptosis to keep cell death rate low. When the levels of these different proteins are optimally regulated the gradient correctly scales with organ growth but when this fails, fwe-mediated apoptosis is activated to trim the developing tissue to match the correct size of the gradient. The chain is Calcium channel flower from Drosophila virilis (Fruit fly).